Here is a 147-residue protein sequence, read N- to C-terminus: Monothiol glutaredoxin-S5 (147 aa).

The region spanning 49–146 is the Glutaredoxin domain; the sequence is AAEVRRAVAE…PILKKAGALW (98 aa). Cys69 lines the [2Fe-2S] cluster pocket. The Responsive for interaction with TGA factors signature appears at 144-147; sequence ALWL.

It belongs to the glutaredoxin family. CC-type subfamily.

The protein localises to the cytoplasm. The protein resides in the nucleus. May only reduce GSH-thiol disulfides, but not protein disulfides. In Oryza sativa subsp. japonica (Rice), this protein is Monothiol glutaredoxin-S5 (GRXS5).